Reading from the N-terminus, the 288-residue chain is Probable HTH-type transcriptional regulator STM3175 (288 aa).

The region spanning 14-113 (RRVCDHIERH…GQSPRRFRQS (100 aa)) is the HTH araC/xylS-type domain. 2 DNA-binding regions (H-T-H motif) span residues 31–52 (EALSRMAHSSPFHFHRQFTTWS) and 80–103 (VIDIALDAGFQNPESFTRAFKTAF). The interval 111–288 (RQSPDWLAWH…LLTDIYLPLR (178 aa)) is putative effector binding domain; binds the peptide antibiotic albicidin.

In terms of assembly, homodimer.

Functionally, probable transcription factor. This chain is Probable HTH-type transcriptional regulator STM3175, found in Salmonella typhimurium (strain LT2 / SGSC1412 / ATCC 700720).